Here is a 69-residue protein sequence, read N- to C-terminus: U-Asilidin(12)-Dg3b (69 aa).

Positions 1-19 (MRFLNIFLFFAVMIAFVSA) are cleaved as a signal peptide. The propeptide occupies 20–33 (SPVLEEEEIDIEPR). Cystine bridges form between C36–C59, C45–C65, and C49–C67.

It belongs to the asilidin-12 family. Expressed by the venom gland.

Its subcellular location is the secreted. The recombinant peptide moderately increases Kv11.1/KCNH2/ERG1 currents and shifts the voltage-dependence of the channel activation to hyperpolarised potentials. In vivo, induces neurotoxic effects when injected into insects (tested on L.cuprina and A.domesticus). The chain is U-Asilidin(12)-Dg3b from Dolopus genitalis (Giant Australian assassin fly).